We begin with the raw amino-acid sequence, 702 residues long: Archaeal Lon protease (702 aa).

Residues 1 to 63 (MSNESTNDAP…VGVEGDVSID (63 aa)) form a disordered region. Residues 1–183 (MSNESTNDAP…EARKRNQMRS (183 aa)) are Cytoplasmic-facing. Positions 10-48 (PPDDDPDDPEPSVDHDDTDGLQDDPADSVDDAGEVDDLE) are enriched in acidic residues. Residue 117-124 (GSPGTGKS) participates in ATP binding. A helical transmembrane segment spans residues 184–201 (FLMWIMILLAVGYALLIA). Over 202 to 206 (TPARP) the chain is Extracellular. Residues 207–223 (LLALLSAAGIYLLFRYT) traverse the membrane as a helical segment. Over 224–702 (NRGSDAMVPK…GTTGGNPSPQ (479 aa)) the chain is Cytoplasmic. The Lon proteolytic domain occupies 487–667 (EEAVGRVNGL…SEVLDVALVG (181 aa)). Residues serine 574 and lysine 617 contribute to the active site.

This sequence belongs to the peptidase S16 family. Archaeal LonB subfamily. Homohexamer. Organized in a ring with a central cavity.

It is found in the cell membrane. ATP-dependent serine protease that mediates the selective degradation of mutant and abnormal proteins as well as certain short-lived regulatory proteins. Degrades polypeptides processively. The chain is Archaeal Lon protease from Halobacterium salinarum (strain ATCC 700922 / JCM 11081 / NRC-1) (Halobacterium halobium).